The primary structure comprises 95 residues: Protein TusB (95 aa).

The protein belongs to the DsrH/TusB family. In terms of assembly, heterohexamer, formed by a dimer of trimers. The hexameric TusBCD complex contains 2 copies each of TusB, TusC and TusD. The TusBCD complex interacts with TusE.

The protein localises to the cytoplasm. Functionally, part of a sulfur-relay system required for 2-thiolation of 5-methylaminomethyl-2-thiouridine (mnm(5)s(2)U) at tRNA wobble positions. This is Protein TusB from Photorhabdus laumondii subsp. laumondii (strain DSM 15139 / CIP 105565 / TT01) (Photorhabdus luminescens subsp. laumondii).